Reading from the N-terminus, the 387-residue chain is Putative ribosomal RNA large subunit methyltransferase MJ1649 (387 aa).

In terms of domain architecture, PUA spans 5–81; that stretch reads LIKLEIDRRA…EEIDYDFFYK (77 aa).

This sequence belongs to the methyltransferase superfamily. RlmI family.

The protein localises to the cytoplasm. The protein is Putative ribosomal RNA large subunit methyltransferase MJ1649 of Methanocaldococcus jannaschii (strain ATCC 43067 / DSM 2661 / JAL-1 / JCM 10045 / NBRC 100440) (Methanococcus jannaschii).